The primary structure comprises 47 residues: Small, acid-soluble spore protein N (47 aa).

Composition is skewed to polar residues over residues Met-1–Phe-11 and Lys-29–Glu-47. Positions Met-1–Glu-47 are disordered.

This sequence belongs to the SspN family.

It is found in the spore core. This Anoxybacillus flavithermus (strain DSM 21510 / WK1) protein is Small, acid-soluble spore protein N.